A 118-amino-acid chain; its full sequence is MICOS complex subunit MIC13 (118 aa).

Residues 1–7 (MVPRVWS) are Mitochondrial matrix-facing. Residues 8–26 (LMRFLIKGSVAGGAIYLVY) form a helical membrane-spanning segment. At 27 to 118 (DQDPLGPSDK…GWEYLKERTK (92 aa)) the chain is on the mitochondrial intermembrane side.

This sequence belongs to the MICOS complex subunit Mic13 family. In terms of assembly, component of the mitochondrial contact site and cristae organizing system (MICOS) complex, composed of at least MICOS10/MIC10, CHCHD3/MIC19, CHCHD6/MIC25, APOO/MIC26, MICOS13/MIC13, APOOL/MIC27 and IMMT/MIC60. The MICOS complex associates with mitochondrial outer membrane proteins SAMM50, MTX1 and MTX2 (together described as components of the mitochondrial outer membrane sorting assembly machinery (SAM) complex) and DNAJC11, mitochondrial inner membrane protein TMEM11 and with HSPA9. The MICOS and SAM complexes together with DNAJC11 are part of a large protein complex spanning both membranes termed the mitochondrial intermembrane space bridging (MIB) complex.

The protein localises to the mitochondrion inner membrane. In terms of biological role, component of the MICOS complex, a large protein complex of the mitochondrial inner membrane that plays crucial roles in the maintenance of crista junctions, inner membrane architecture, and formation of contact sites to the outer membrane. Constituent of mature MICOS complex, it is required for the formation of cristae junction (CJ) and maintenance of cristae morphology. Required for the incorporation of MICOS10/MIC10 into the MICOS complex. This Sus scrofa (Pig) protein is MICOS complex subunit MIC13.